Here is a 142-residue protein sequence, read N- to C-terminus: Small ribosomal subunit protein uS12 (142 aa).

It belongs to the universal ribosomal protein uS12 family. Part of the 30S ribosomal subunit.

With S4 and S5 plays an important role in translational accuracy. Located at the interface of the 30S and 50S subunits. The protein is Small ribosomal subunit protein uS12 of Archaeoglobus fulgidus (strain ATCC 49558 / DSM 4304 / JCM 9628 / NBRC 100126 / VC-16).